Consider the following 291-residue polypeptide: MRTITTIAELRDALAEHRRAGRSVGLVPTMGYLHVGHMELVRRARGENDVVVASIFVNPLQFGANEDLGEYPRDLARDQELLTDGGVDILFAPGVSDMYPRPMETVVDVPKLGSELEGAVRPGHFAGVATVVTKLFNIVQPDRAYFGEKDFQQLQIIRRMVEDLAQPVKVVGVPTVREEDGLACSSRNVYLTTEERRAAAIVPRALDEAERLIASGVTEPAEIEKRVLEFLAGEPLARPEVVALRDPETLEPFGEISGKPVLILLFVRFGTTKLLDNRVIAPKSARFAKVA.

30–37 (MGYLHVGH) serves as a coordination point for ATP. The active-site Proton donor is His37. Gln61 is a binding site for (R)-pantoate. A beta-alanine-binding site is contributed by Gln61. Position 147 to 150 (147 to 150 (GEKD)) interacts with ATP. Gln153 is a (R)-pantoate binding site. ATP is bound by residues Val176 and 184–187 (CSSR).

This sequence belongs to the pantothenate synthetase family. In terms of assembly, homodimer.

Its subcellular location is the cytoplasm. It catalyses the reaction (R)-pantoate + beta-alanine + ATP = (R)-pantothenate + AMP + diphosphate + H(+). Its pathway is cofactor biosynthesis; (R)-pantothenate biosynthesis; (R)-pantothenate from (R)-pantoate and beta-alanine: step 1/1. Functionally, catalyzes the condensation of pantoate with beta-alanine in an ATP-dependent reaction via a pantoyl-adenylate intermediate. This chain is Pantothenate synthetase, found in Sinorhizobium medicae (strain WSM419) (Ensifer medicae).